Consider the following 608-residue polypeptide: Kelch-like protein 10 (608 aa).

One can recognise a BTB domain in the interval 39–106 (CDVVIKVNGF…AYTRTVPITP (68 aa)). Kelch repeat units follow at residues 292–339 (ILFA…YLKG), 340–386 (YVYI…VLGN), 388–433 (IYAM…TLYG), 434–480 (KVYI…AYGE), 481–527 (HVYA…VVDD), and 529–574 (LFVV…VVPG). Position 501 is a phosphoserine (serine 501).

Self-associates. Interacts with CUL3; indicative for the participation in an E3 ubiquitin ligase complex.

It localises to the cytoplasm. It participates in protein modification; protein ubiquitination. In terms of biological role, may be a substrate-specific adapter of a CUL3-based E3 ubiquitin-protein ligase complex which mediates the ubiquitination and subsequent proteasomal degradation of target proteins during spermatogenesis. In Homo sapiens (Human), this protein is Kelch-like protein 10 (KLHL10).